A 271-amino-acid chain; its full sequence is Sulfur carrier protein adenylyltransferase (271 aa).

Residues Arg13, Gly40, Glu61, Arg72, Lys85, Leu109, and 129 to 133 (DNFPT) contribute to the ATP site. Cys175 and Cys178 together coordinate Zn(2+). A Glycyl cysteine thioester (Cys-Gly) (interchain with G-Cter in TtuB) cross-link involves residue Cys192. Positions 249 and 252 each coordinate Zn(2+).

Belongs to the HesA/MoeB/ThiF family. Zn(2+) serves as cofactor. Post-translationally, conjugated to TtuB via a covalent linkage that likely involves a lysine residue. Is able to form a covalent thioester adduct with TtuB via Cys-192 in vitro.

The catalysed reaction is [molybdopterin-synthase sulfur-carrier protein]-C-terminal Gly-Gly + ATP + H(+) = [molybdopterin-synthase sulfur-carrier protein]-C-terminal Gly-Gly-AMP + diphosphate. The enzyme catalyses [ThiS sulfur-carrier protein]-C-terminal Gly-Gly + ATP + H(+) = [ThiS sulfur-carrier protein]-C-terminal Gly-Gly-AMP + diphosphate. It carries out the reaction [TtuB sulfur-carrier protein]-C-terminal Gly-Gly + ATP + H(+) = [TtuB sulfur-carrier protein]-C-terminal Gly-Gly-AMP + diphosphate. It functions in the pathway tRNA modification. Its pathway is cofactor biosynthesis; thiamine diphosphate biosynthesis. It participates in cofactor biosynthesis; molybdopterin biosynthesis. With respect to regulation, enzymatic activity may be regulated by TtuB conjugation. In terms of biological role, adenylyltransferase involved in the biosynthesis of several sulfur compounds. Is required for the 2-thiolation of 5-methyluridine residue at position 54 in the T loop of tRNAs, leading to 5-methyl-2-thiouridine (m(5)s(2)U or s(2)T). This modification allows thermal stabilization of tRNAs in thermophilic microorganisms, and is essential for cell growth at high temperatures. TtuC catalyzes the adenylation by ATP of the carboxyl group of the C-terminal glycine of sulfur carrier protein TtuB. Is also involved in the biosynthesis of thiamine, molybdenum cofactor (Moco) and probably tungsten cofactor (Wco), by adenylating the sulfur carriers ThiS and MoaD. Is required for the conjugation of TtuB to target proteins. The sequence is that of Sulfur carrier protein adenylyltransferase from Thermus thermophilus (strain ATCC BAA-163 / DSM 7039 / HB27).